The primary structure comprises 196 residues: Probable GTP-binding protein EngB (196 aa).

Residues Glu-24 to Ser-196 form the EngB-type G domain. GTP-binding positions include Gly-32–Ser-39, Gly-59–Thr-63, Asp-77–Gly-80, Thr-144–Asp-147, and Tyr-176–Ser-178. Ser-39 and Thr-61 together coordinate Mg(2+).

Belongs to the TRAFAC class TrmE-Era-EngA-EngB-Septin-like GTPase superfamily. EngB GTPase family. Requires Mg(2+) as cofactor.

Functionally, necessary for normal cell division and for the maintenance of normal septation. The polypeptide is Probable GTP-binding protein EngB (Staphylococcus aureus (strain MRSA252)).